Reading from the N-terminus, the 345-residue chain is MPPAAVMIDTTPDFDFSPAHAAAAASAKGDSGDRTLLLAPPSIASREDRLTSLFSVYDRSSTDLQMLDRLAAGLVSLPAKTYDLILVLTDPDGSRRSEVSPLLSNREIWGKVVPALKAGGTLRSEDGSLGQGNSIEEKEAILAGLVLGDDGYTKPDYAEQEVVPLRFGAKKVNADGSVPLSFGKKAAAAPAPAPAPAPVSKGPAGVGFIDFSDDLDLDAEDDDDVIDEDTLLTEADLKRPIQQPPECAPQPGKKRRACKDCTCGLAERIAAEDKARREKAEKGLATLKLKSEDLSELDFTVQGKTGSCNSCYLGDAFRCADCPYIGLPAFKPGEQVKILNNTAQI.

The interval 29 to 163 (GDSGDRTLLL…KPDYAEQEVV (135 aa)) is N-terminal SAM-like domain. Residues 164-237 (PLRFGAKKVN…EDTLLTEADL (74 aa)) form a linker region. The [2Fe-2S] cluster site is built by C247, C258, C261, and C263. The fe-S binding site A stretch occupies residues 247-263 (CAPQPGKKRRACKDCTC). Residues C308, C311, C319, and C322 each contribute to the [4Fe-4S] cluster site. 2 short sequence motifs (cx2C motif) span residues 308-311 (CNSC) and 319-322 (CADC). Residues 308-322 (CNSCYLGDAFRCADC) form a fe-S binding site B region.

Belongs to the anamorsin family. As to quaternary structure, monomer. Interacts with TAH18. Interacts with MIA40. It depends on [2Fe-2S] cluster as a cofactor. The cofactor is [4Fe-4S] cluster.

It is found in the cytoplasm. Its subcellular location is the mitochondrion intermembrane space. Functionally, component of the cytosolic iron-sulfur (Fe-S) protein assembly (CIA) machinery required for the maturation of extramitochondrial Fe-S proteins. Part of an electron transfer chain functioning in an early step of cytosolic Fe-S biogenesis, facilitating the de novo assembly of a [4Fe-4S] cluster on the scaffold complex CFD1-NBP35. Electrons are transferred to DRE2 from NADPH via the FAD- and FMN-containing protein TAH18. TAH18-DRE2 are also required for the assembly of the diferric tyrosyl radical cofactor of ribonucleotide reductase (RNR), probably by providing electrons for reduction during radical cofactor maturation in the catalytic small subunit RNR2. The polypeptide is Fe-S cluster assembly protein DRE2 (Podospora anserina (strain S / ATCC MYA-4624 / DSM 980 / FGSC 10383) (Pleurage anserina)).